The sequence spans 448 residues: MPGIKRILTVTILALCLPSPGNAQAQCTNGFDLDRQSGQCLDIDECRTIPEACRGDMMCVNQNGRYLCIPRTNPVYRGPYSNPYSTPYSGPYPAAAPPLSAPNYPTISRPLICRFGYQMDESNQCVDVDECATDSHQCNPTQICINTEGGYTCSCTDGYWLLEGQCLDIDECRYGYCQQLCANVPGSYSCTCNPGFTLNEDGRSCQDVNECATENPCVQTCVNTYGSFICRCDPGYELEEDGVHCSDMDECSFSEFLCQHECVNQPGTYFCSCPPGYILLDDNRSCQDINECEHRNHTCNLQQTCYNLQGGFKCIDPIRCEEPYLRISDNRCMCPAENPGCRDQPFTILYRDMDVVSGRSVPADIFQMQATTRYPGAYYIFQIKSGNEGREFYMRQTGPISATLVMTRPIKGPREIQLDLEMITVNTVINFRGSSVIRLRIYVSQYPF.

The N-terminal stretch at 1–23 (MPGIKRILTVTILALCLPSPGNA) is a signal peptide. The EGF-like 1; calcium-binding domain maps to 42–82 (DIDECRTIPEACRGDMMCVNQNGRYLCIPRTNPVYRGPYSN). 17 cysteine pairs are disulfide-bonded: cysteine 46-cysteine 59, cysteine 53-cysteine 68, cysteine 131-cysteine 144, cysteine 138-cysteine 153, cysteine 155-cysteine 166, cysteine 172-cysteine 181, cysteine 177-cysteine 190, cysteine 192-cysteine 205, cysteine 211-cysteine 221, cysteine 217-cysteine 230, cysteine 232-cysteine 245, cysteine 251-cysteine 262, cysteine 258-cysteine 271, cysteine 273-cysteine 286, cysteine 292-cysteine 305, cysteine 299-cysteine 314, and cysteine 320-cysteine 332. Residues 54 to 56 (RGD) carry the Cell attachment site motif. Positions 127–167 (DVDECATDSHQCNPTQICINTEGGYTCSCTDGYWLLEGQCL) constitute an EGF-like 2; calcium-binding domain. Positions 168–206 (DIDECRYGYCQQLCANVPGSYSCTCNPGFTLNEDGRSCQ) constitute an EGF-like 3; calcium-binding domain. Residues 207-246 (DVNECATENPCVQTCVNTYGSFICRCDPGYELEEDGVHCS) form the EGF-like 4; calcium-binding domain. Residues 245–448 (CSDMDECSFS…LRIYVSQYPF (204 aa)) are interaction with LOXL1. The 41-residue stretch at 247 to 287 (DMDECSFSEFLCQHECVNQPGTYFCSCPPGYILLDDNRSCQ) folds into the EGF-like 5; calcium-binding domain. Residues asparagine 283 and asparagine 296 are each glycosylated (N-linked (GlcNAc...) asparagine). In terms of domain architecture, EGF-like 6; calcium-binding spans 288-333 (DINECEHRNHTCNLQQTCYNLQGGFKCIDPIRCEEPYLRISDNRCM).

It belongs to the fibulin family. As to quaternary structure, homodimer. Monomer, homodimerizes in presence of Ca(2+). Interacts with ELN. Interacts (via N-terminus) with the integrins ITGAV/ITGB3, ITGAV/ITGB5 and ITGA9/ITGB1. Interacts with FBN1 (via N-terminal domain). Forms a ternary complex with ELN and FBN1. Interacts with EFEMP2 with moderate affinity. Interacts with LOXL1. In terms of processing, N-glycosylated.

It is found in the secreted. The protein localises to the extracellular space. It localises to the extracellular matrix. Essential for elastic fiber formation, is involved in the assembly of continuous elastin (ELN) polymer and promotes the interaction of microfibrils and ELN. Stabilizes and organizes elastic fibers in the skin, lung and vasculature. Promotes adhesion of endothelial cells through interaction of integrins and the RGD motif. Vascular ligand for integrin receptors which may play a role in vascular development and remodeling. May act as an adapter that mediates the interaction between FBN1 and ELN. In Pongo abelii (Sumatran orangutan), this protein is Fibulin-5 (FBLN5).